The primary structure comprises 326 residues: Methionyl-tRNA formyltransferase (326 aa).

110–113 (SLLP) serves as a coordination point for (6S)-5,6,7,8-tetrahydrofolate. The disordered stretch occupies residues 307 to 326 (VGTRFSPPEAPQREPAPGEA).

This sequence belongs to the Fmt family.

It catalyses the reaction L-methionyl-tRNA(fMet) + (6R)-10-formyltetrahydrofolate = N-formyl-L-methionyl-tRNA(fMet) + (6S)-5,6,7,8-tetrahydrofolate + H(+). Attaches a formyl group to the free amino group of methionyl-tRNA(fMet). The formyl group appears to play a dual role in the initiator identity of N-formylmethionyl-tRNA by promoting its recognition by IF2 and preventing the misappropriation of this tRNA by the elongation apparatus. This Symbiobacterium thermophilum (strain DSM 24528 / JCM 14929 / IAM 14863 / T) protein is Methionyl-tRNA formyltransferase.